A 283-amino-acid polypeptide reads, in one-letter code: Shikimate kinase (283 aa).

Position 86–96 (Pro-86–Ala-96) interacts with ATP.

It belongs to the GHMP kinase family. Archaeal shikimate kinase subfamily.

Its subcellular location is the cytoplasm. The catalysed reaction is shikimate + ATP = 3-phosphoshikimate + ADP + H(+). Its pathway is metabolic intermediate biosynthesis; chorismate biosynthesis; chorismate from D-erythrose 4-phosphate and phosphoenolpyruvate: step 5/7. This is Shikimate kinase from Methanococcus maripaludis (strain C5 / ATCC BAA-1333).